A 3511-amino-acid polypeptide reads, in one-letter code: Unconventional myosin-XV (3511 aa).

Disordered regions lie at residues 1-44, 574-690, 712-1030, and 1105-1135; these read MADE…TPKI, KKPI…SLRQ, FAEP…PNKN, and VSSF…PQAC. Residues 622-634 show a composition bias toward polar residues; that stretch reads SQPQARNNNNSHG. Over residues 654 to 672 the composition is skewed to pro residues; sequence PPMPAPSPSPASPLTPPFS. Residues 769-792 show a composition bias toward low complexity; the sequence is PSLRSLPGQGYHSPLGPLSPQLSL. Positions 797 to 807 are enriched in pro residues; that stretch reads FQPPFPPPPRR. Residues 1206 to 1883 form the Myosin motor domain; sequence DGVEDMTQLE…LHQLLESMRE (678 aa). 1299–1306 contributes to the ATP binding site; the sequence is GESGSGKT. A coiled-coil region spans residues 1307–1334; sequence EATKLILRCLAAMNQRRDVMQQIKILEA. The segment at 1776–1783 is actin-binding; sequence FVRCLKPN. The tract at residues 1872–2013 is neck or regulatory domain; it reads EHLHQLLESM…SSGPRVAVVR (142 aa). 2 IQ domains span residues 1886–1908 and 1909–1938; these read QNRA…HFRS and LRRK…SLLK. A tail region spans residues 2014-3511; the sequence is APRLQAEPCV…TLPPSEITLL (1498 aa). A MyTH4 1 domain is found at 2049-2195; that stretch reads MLTVPLKMPL…PTQLEWTAIQ (147 aa). 5 disordered regions span residues 2330–2359, 2392–2425, 2460–2509, 2565–2584, and 2629–2648; these read SHKE…GEST, YRMK…PIPG, PLSA…SVAK, KQPP…GKVF, and RPCM…PPED. Over residues 2337–2351 the composition is skewed to polar residues; sequence NGETEAQRWTSNRQA. The segment covering 2395–2406 has biased composition (gly residues); it reads KGGGQPGGGGGS. Positions 2410-2420 are enriched in basic and acidic residues; it reads DTSRRPPEPKL. Residues 2573–2584 are compositionally biased toward basic and acidic residues; the sequence is PEARRTDGGKVF. Positions 2848–2934 constitute an SH3 domain; that stretch reads KDSDYVVAVR…PSELVQPAAA (87 aa). The segment at 2964–2984 is disordered; it reads EVGRRREGPPVRARSADSGED. A compositionally biased stretch (basic and acidic residues) spans 2965-2980; it reads VGRRREGPPVRARSAD. The MyTH4 2 domain maps to 3031 to 3185; the sequence is FTKVPIQESL…PSNMELRAML (155 aa). An FERM domain is found at 3190–3511; that stretch reads SKRQLFLLPG…TLPPSEITLL (322 aa).

The protein belongs to the TRAFAC class myosin-kinesin ATPase superfamily. Myosin family. In terms of assembly, interacts with the third PDZ domain of WHRN which is necessary for localization of WHRN to stereocilium tips. Interacts with FASLG. Interacts with EPS8. As to expression, in the developing inner ear, expressed in cochlea and vestibular apparatus. Expression appears to be restricted to cochlear neurosensory cells and upper epithelial layer of macula saccula. Also expressed in macula utriculi and cristae ampullaris of the semicircular canals. In adult cochlear hair cells, highest expression in stereocilia and apical body.

The protein localises to the cell projection. The protein resides in the stereocilium. It localises to the cytoplasm. Its subcellular location is the cytoskeleton. Functionally, myosins are actin-based motor molecules with ATPase activity. Unconventional myosins serve in intracellular movements. Their highly divergent tails are presumed to bind to membranous compartments, which would be moved relative to actin filaments. Required for the arrangement of stereocilia in mature hair bundles. This Mus musculus (Mouse) protein is Unconventional myosin-XV (Myo15a).